The following is a 264-amino-acid chain: MRKFLLKPKKSLGQNFILSNEIIKRIVALAGSLKDFNVIEIGPGYGALTREILAYNPKFLLSIEKDSSLVKHHEQLLNEHQGKYRIIEADALNVVEKELVECPVKVIANLPYNISVALFLKWLNNIKFFTNLTLMFQKEVAERITAEPNSKDYGSLSVLSQLLCDIKKEFDIEPKEFFPRPKVYSSVITVKPLPTPRFAVNLETLTKLTRAVFAQRRKMLRNSLQSITSDVSTTLENAKLSGDERPESLTIEQFCLLANNIIMR.

Residues asparagine 15, isoleucine 17, glycine 42, glutamate 64, aspartate 90, and asparagine 109 each contribute to the S-adenosyl-L-methionine site.

It belongs to the class I-like SAM-binding methyltransferase superfamily. rRNA adenine N(6)-methyltransferase family. RsmA subfamily.

The protein resides in the cytoplasm. It carries out the reaction adenosine(1518)/adenosine(1519) in 16S rRNA + 4 S-adenosyl-L-methionine = N(6)-dimethyladenosine(1518)/N(6)-dimethyladenosine(1519) in 16S rRNA + 4 S-adenosyl-L-homocysteine + 4 H(+). Its function is as follows. Specifically dimethylates two adjacent adenosines (A1518 and A1519) in the loop of a conserved hairpin near the 3'-end of 16S rRNA in the 30S particle. May play a critical role in biogenesis of 30S subunits. The sequence is that of Ribosomal RNA small subunit methyltransferase A from Wolbachia pipientis subsp. Culex pipiens (strain wPip).